We begin with the raw amino-acid sequence, 628 residues long: Beta-lactamase-like protein 1 (628 aa).

An N-terminal signal peptide occupies residues 1-28 (MKNILSFSFSFSFLYILFLLLFLNNNLL). N-linked (GlcNAc...) asparagine glycosylation is found at Asn45, Asn68, Asn198, and Asn241. Residues 245 to 281 (NNNNNNNNNNNNNNNNNNNNNNNNNNNNNNNNNNNNN) are compositionally biased toward low complexity. The segment at 245–285 (NNNNNNNNNNNNNNNNNNNNNNNNNNNNNNNNNNNNNKIKT) is disordered. N-linked (GlcNAc...) asparagine glycans are attached at residues Asn313 and Asn335. The disordered stretch occupies residues 494 to 516 (EKEEKEEEEENQQDESQQQQQQQ). Acidic residues predominate over residues 496 to 506 (EEKEEEEENQQ). Residues 507–516 (DESQQQQQQQ) show a composition bias toward low complexity.

Belongs to the beta-lactamase family.

It localises to the secreted. The sequence is that of Beta-lactamase-like protein 1 from Dictyostelium discoideum (Social amoeba).